We begin with the raw amino-acid sequence, 274 residues long: Penicillin-insensitive murein endopeptidase (274 aa).

Residues 1-19 (MKKTAIALLAWFVSSASLA) form the signal peptide. Cystine bridges form between cysteine 44/cysteine 265, cysteine 187/cysteine 235, and cysteine 216/cysteine 223. Histidine 110, histidine 113, aspartate 120, aspartate 147, histidine 150, and histidine 211 together coordinate Zn(2+). The disordered stretch occupies residues 225–274 (DQPLPPPGDGCGAELQSWFEPPKPGTTKPEKKTPPPLPPSCQALLDEHVL).

Belongs to the peptidase M74 family. In terms of assembly, dimer. It depends on Zn(2+) as a cofactor.

It is found in the periplasm. Murein endopeptidase that cleaves the D-alanyl-meso-2,6-diamino-pimelyl amide bond that connects peptidoglycan strands. Likely plays a role in the removal of murein from the sacculus. The chain is Penicillin-insensitive murein endopeptidase from Salmonella agona (strain SL483).